The primary structure comprises 455 residues: MAAPSPSSPPNLLSPPPFRSPEASYFLRTCSNFSQLKQIHTKIIKHNLTNDQLLVRQLISVSSSFGETQYASLVFNQLQSPSTFTWNLMIRSLSVNHKPREALLLFILMMISHQSQFDKFTFPFVIKACLASSSIRLGTQVHGLAIKAGFFNDVFFQNTLMDLYFKCGKPDSGRKVFDKMPGRSIVSWTTMLYGLVSNSQLDSAEIVFNQMPMRNVVSWTAMITAYVKNRRPDEAFQLFRRMQVDDVKPNEFTIVNLLQASTQLGSLSMGRWVHDYAHKNGFVLDCFLGTALIDMYSKCGSLQDARKVFDVMQGKSLATWNSMITSLGVHGCGEEALSLFEEMEEEASVEPDAITFVGVLSACANTGNVKDGLRYFTRMIQVYGISPIREHNACMIQLLEQALEVEKASNLVESMDSDPDFNSSFGNEYTDGMNETNETPSQHQIMFTKWDTGRF.

A chloroplast-targeting transit peptide spans 1–19 (MAAPSPSSPPNLLSPPPFR). PPR repeat units follow at residues 51 to 81 (DQLL…LQSP), 82 to 117 (STFT…QSQF), 118 to 152 (DKFT…GFFN), 153 to 187 (DVFF…SIVS), 188 to 214 (WTTM…MPMR), 215 to 249 (NVVS…DVKP), 250 to 284 (NEFT…GFVL), 285 to 315 (DCFL…MQGK), 316 to 350 (SLAT…ASVE), 352 to 387 (DAIT…GISP), and 388 to 418 (IREH…MDSD).

It belongs to the PPR family. PCMP-A subfamily.

The protein localises to the plastid. It localises to the chloroplast. The sequence is that of Pentatricopeptide repeat-containing protein At3g26630, chloroplastic (PCMP-A6) from Arabidopsis thaliana (Mouse-ear cress).